Reading from the N-terminus, the 530-residue chain is Phosphoenolpyruvate carboxykinase (ATP) (530 aa).

Substrate is bound by residues arginine 57, tyrosine 193, and lysine 199. Residues lysine 199, histidine 218, and 234–242 each bind ATP; that span reads GLSGTGKTT. 2 residues coordinate Mn(2+): lysine 199 and histidine 218. Aspartate 255 contacts Mn(2+). Positions 283, 320, and 445 each coordinate ATP. A substrate-binding site is contributed by arginine 320.

Belongs to the phosphoenolpyruvate carboxykinase (ATP) family. The cofactor is Mn(2+).

It is found in the cytoplasm. The catalysed reaction is oxaloacetate + ATP = phosphoenolpyruvate + ADP + CO2. Its pathway is carbohydrate biosynthesis; gluconeogenesis. Functionally, involved in the gluconeogenesis. Catalyzes the conversion of oxaloacetate (OAA) to phosphoenolpyruvate (PEP) through direct phosphoryl transfer between the nucleoside triphosphate and OAA. The protein is Phosphoenolpyruvate carboxykinase (ATP) of Leptospira biflexa serovar Patoc (strain Patoc 1 / Ames).